The chain runs to 269 residues: Enoyl-[acyl-carrier-protein] reductase [NADH] (269 aa).

Residues 20–21 (SI), 64–65 (DV), and 95–96 (IG) each bind NAD(+). Residue Tyr158 participates in substrate binding. The NAD(+) site is built by Lys165 and Ile194.

Belongs to the short-chain dehydrogenases/reductases (SDR) family. FabI subfamily. In terms of assembly, homodimer. Homotetramer.

The catalysed reaction is a 2,3-saturated acyl-[ACP] + NAD(+) = a (2E)-enoyl-[ACP] + NADH + H(+). It catalyses the reaction a 2,3-saturated acyl-CoA + NAD(+) = a (2E)-enoyl-CoA + NADH + H(+). The protein operates within lipid metabolism; mycolic acid biosynthesis. Functionally, enoyl-ACP reductase of the type II fatty acid syntase (FAS-II) system, which is involved in the biosynthesis of mycolic acids, a major component of mycobacterial cell walls. Catalyzes the NADH-dependent reduction of the double bond of 2-trans-enoyl-[acyl-carrier protein], an essential step in the fatty acid elongation cycle of the FAS-II pathway. Shows preference for long-chain fatty acyl thioester substrates, and can also use 2-trans-enoyl-CoAs as alternative substrates. The mycobacterial FAS-II system utilizes the products of the FAS-I system as primers to extend fatty acyl chain lengths up to C56, forming the meromycolate chain that serves as the precursor for final mycolic acids. Is the primary target of the first-line antitubercular drug isoniazid (INH) and of the second-line drug ethionamide (ETH). Overexpressed inhA confers INH and ETH resistance to M.bovis. The mechanism of isoniazid action against InhA is covalent attachment of the activated form of the drug to the nicotinamide ring of NAD and binding of the INH-NAD adduct to the active site of InhA. Similarly, the ETH-NAD adduct binds InhA. The sequence is that of Enoyl-[acyl-carrier-protein] reductase [NADH] from Mycobacterium bovis (strain ATCC BAA-935 / AF2122/97).